Reading from the N-terminus, the 229-residue chain is Cytidylate kinase (229 aa).

12-20 (GPSGSGKGT) provides a ligand contact to ATP.

The protein belongs to the cytidylate kinase family. Type 1 subfamily.

Its subcellular location is the cytoplasm. It carries out the reaction CMP + ATP = CDP + ADP. It catalyses the reaction dCMP + ATP = dCDP + ADP. The chain is Cytidylate kinase from Pseudomonas fluorescens (strain SBW25).